We begin with the raw amino-acid sequence, 288 residues long: Protoheme IX farnesyltransferase (288 aa).

9 helical membrane-spanning segments follow: residues 6–26 (VILYLLEVLKPKIILGNLLSL), 44–64 (FLDSLSLFLIVGSACVLNNVI), 89–109 (LAILIAMFMLFLGLILCVKFI), 111–131 (VVCFCLFLLGWLTYIFLYSFF), 138–158 (ISTIVGSISGSLPPIVGYCSV), 169–189 (LLIMFALWQIPHSYAICILHF), 213–233 (IILHIILFFISVIVLTFINSI), 238–258 (LIISFFLCLTWLYYSLLELTI), and 268–288 (IFRWSIIVIFLLNIIMLFGFV).

Belongs to the UbiA prenyltransferase family. Protoheme IX farnesyltransferase subfamily.

The protein resides in the cell membrane. It catalyses the reaction heme b + (2E,6E)-farnesyl diphosphate + H2O = Fe(II)-heme o + diphosphate. Its pathway is porphyrin-containing compound metabolism; heme O biosynthesis; heme O from protoheme: step 1/1. Its function is as follows. Converts heme B (protoheme IX) to heme O by substitution of the vinyl group on carbon 2 of heme B porphyrin ring with a hydroxyethyl farnesyl side group. This Buchnera aphidicola subsp. Baizongia pistaciae (strain Bp) protein is Protoheme IX farnesyltransferase.